Here is a 1317-residue protein sequence, read N- to C-terminus: DNA-directed RNA polymerase subunit beta' (1317 aa).

4 residues coordinate Zn(2+): Cys-60, Cys-62, Cys-75, and Cys-78. Mg(2+)-binding residues include Asp-535, Asp-537, and Asp-539. 4 residues coordinate Zn(2+): Cys-890, Cys-967, Cys-974, and Cys-977.

The protein belongs to the RNA polymerase beta' chain family. The RNAP catalytic core consists of 2 alpha, 1 beta, 1 beta' and 1 omega subunit. When a sigma factor is associated with the core the holoenzyme is formed, which can initiate transcription. Mg(2+) serves as cofactor. Zn(2+) is required as a cofactor.

It carries out the reaction RNA(n) + a ribonucleoside 5'-triphosphate = RNA(n+1) + diphosphate. DNA-dependent RNA polymerase catalyzes the transcription of DNA into RNA using the four ribonucleoside triphosphates as substrates. This chain is DNA-directed RNA polymerase subunit beta', found in Nocardia farcinica (strain IFM 10152).